Reading from the N-terminus, the 268-residue chain is GTP cyclohydrolase FolE2 (268 aa).

The protein belongs to the GTP cyclohydrolase IV family.

It carries out the reaction GTP + H2O = 7,8-dihydroneopterin 3'-triphosphate + formate + H(+). Its pathway is cofactor biosynthesis; 7,8-dihydroneopterin triphosphate biosynthesis; 7,8-dihydroneopterin triphosphate from GTP: step 1/1. In terms of biological role, converts GTP to 7,8-dihydroneopterin triphosphate. In Methylococcus capsulatus (strain ATCC 33009 / NCIMB 11132 / Bath), this protein is GTP cyclohydrolase FolE2.